The following is a 120-amino-acid chain: Ribosome-binding factor A (120 aa).

Belongs to the RbfA family. Monomer. Binds 30S ribosomal subunits, but not 50S ribosomal subunits or 70S ribosomes.

Its subcellular location is the cytoplasm. One of several proteins that assist in the late maturation steps of the functional core of the 30S ribosomal subunit. Associates with free 30S ribosomal subunits (but not with 30S subunits that are part of 70S ribosomes or polysomes). Required for efficient processing of 16S rRNA. May interact with the 5'-terminal helix region of 16S rRNA. In Rickettsia felis (strain ATCC VR-1525 / URRWXCal2) (Rickettsia azadi), this protein is Ribosome-binding factor A.